Consider the following 59-residue polypeptide: MKFSSIILLTLLICSMSIFGNCQVETNKKCQGGSCASVCRRVIGVAAGKCINGRCVCYP.

An N-terminal signal peptide occupies residues 1–22; sequence MKFSSIILLTLLICSMSIFGNC. At Gln23 the chain carries Pyrrolidone carboxylic acid. 3 disulfide bridges follow: Cys30–Cys50, Cys35–Cys55, and Cys39–Cys57.

Belongs to the short scorpion toxin superfamily. Potassium channel inhibitor family. Alpha-KTx 15 subfamily. Expressed by the venom gland.

Its subcellular location is the secreted. In terms of biological role, blocker of A-type voltage-gated potassium channels of cerebellar granular cells. May also inhibit Kv4/KCND when coexpressed with DPP6 or DPP10. The occlusion of the outer entry of the K(+) conducting pore is partially reversible and affects both open and closed channels. It shares the same target in rat brain than BmTX3 (AC Q8I0L5) and AmmTX3 (AC P60208). The polypeptide is Potassium channel toxin alpha-KTx 15.5 (Androctonus australis (Sahara scorpion)).